We begin with the raw amino-acid sequence, 233 residues long: Biosynthetic peptidoglycan transglycosylase (233 aa).

Residues Ile17 to Leu37 form a helical membrane-spanning segment.

Belongs to the glycosyltransferase 51 family.

Its subcellular location is the cell inner membrane. The enzyme catalyses [GlcNAc-(1-&gt;4)-Mur2Ac(oyl-L-Ala-gamma-D-Glu-L-Lys-D-Ala-D-Ala)](n)-di-trans,octa-cis-undecaprenyl diphosphate + beta-D-GlcNAc-(1-&gt;4)-Mur2Ac(oyl-L-Ala-gamma-D-Glu-L-Lys-D-Ala-D-Ala)-di-trans,octa-cis-undecaprenyl diphosphate = [GlcNAc-(1-&gt;4)-Mur2Ac(oyl-L-Ala-gamma-D-Glu-L-Lys-D-Ala-D-Ala)](n+1)-di-trans,octa-cis-undecaprenyl diphosphate + di-trans,octa-cis-undecaprenyl diphosphate + H(+). It functions in the pathway cell wall biogenesis; peptidoglycan biosynthesis. Functionally, peptidoglycan polymerase that catalyzes glycan chain elongation from lipid-linked precursors. In Rhizobium leguminosarum bv. trifolii (strain WSM2304), this protein is Biosynthetic peptidoglycan transglycosylase.